We begin with the raw amino-acid sequence, 208 residues long: Uracil phosphoribosyltransferase (208 aa).

5-phospho-alpha-D-ribose 1-diphosphate is bound by residues R78, R103, and 130–138 (DPMFATGGT). Residues I193 and 198–200 (GDA) contribute to the uracil site. D199 provides a ligand contact to 5-phospho-alpha-D-ribose 1-diphosphate.

This sequence belongs to the UPRTase family. The cofactor is Mg(2+).

It carries out the reaction UMP + diphosphate = 5-phospho-alpha-D-ribose 1-diphosphate + uracil. Its pathway is pyrimidine metabolism; UMP biosynthesis via salvage pathway; UMP from uracil: step 1/1. Its activity is regulated as follows. Allosterically activated by GTP. Functionally, catalyzes the conversion of uracil and 5-phospho-alpha-D-ribose 1-diphosphate (PRPP) to UMP and diphosphate. This is Uracil phosphoribosyltransferase from Campylobacter curvus (strain 525.92).